The primary structure comprises 429 residues: Serine hydroxymethyltransferase (429 aa).

Residues Leu-126 and Gly-130 to Leu-132 contribute to the (6S)-5,6,7,8-tetrahydrofolate site. Lys-235 bears the N6-(pyridoxal phosphate)lysine mark. Ser-359–Phe-361 provides a ligand contact to (6S)-5,6,7,8-tetrahydrofolate.

Belongs to the SHMT family. In terms of assembly, homodimer. The cofactor is pyridoxal 5'-phosphate.

The protein resides in the cytoplasm. The enzyme catalyses (6R)-5,10-methylene-5,6,7,8-tetrahydrofolate + glycine + H2O = (6S)-5,6,7,8-tetrahydrofolate + L-serine. Its pathway is one-carbon metabolism; tetrahydrofolate interconversion. It functions in the pathway amino-acid biosynthesis; glycine biosynthesis; glycine from L-serine: step 1/1. Functionally, catalyzes the reversible interconversion of serine and glycine with tetrahydrofolate (THF) serving as the one-carbon carrier. This reaction serves as the major source of one-carbon groups required for the biosynthesis of purines, thymidylate, methionine, and other important biomolecules. Also exhibits THF-independent aldolase activity toward beta-hydroxyamino acids, producing glycine and aldehydes, via a retro-aldol mechanism. The protein is Serine hydroxymethyltransferase of Parasynechococcus marenigrum (strain WH8102).